The chain runs to 498 residues: Elastase (498 aa).

The signal sequence occupies residues 1-23 (MKKVSTLDLLFVAIMGVSPAAFA). Residues 24 to 197 (ADLIDVSKLP…VLDQWEGLAH (174 aa)) constitute a propeptide that is removed on maturation. A disulfide bond links Cys-227 and Cys-255. Phosphothreonine is present on Thr-236. Position 333 (Asp-333) interacts with Ca(2+). Residue His-337 participates in Zn(2+) binding. Glu-338 is a catalytic residue. Positions 341 and 361 each coordinate Zn(2+). Ca(2+)-binding residues include Glu-369, Glu-372, Asp-380, and Leu-382. Residue His-420 is the Proton donor of the active site. Cys-467 and Cys-494 are oxidised to a cystine.

This sequence belongs to the peptidase M4 family. It depends on Ca(2+) as a cofactor. Zn(2+) is required as a cofactor. Post-translationally, made as a pre-pro-protein which is exported to the periplasm. Probably autocatalyzes cleavage of its pro-peptide. The pro-peptide can be secreted with mature elastase.

It localises to the secreted. It catalyses the reaction Hydrolysis of proteins including elastin, collagen types III and IV, fibronectin and immunoglobulin A, generally with bulky hydrophobic group at P1'. Insulin B chain cleavage pattern identical to that of thermolysin, but specificity differs in other respects.. Functionally, cleaves host elastase, collagen, IgI and several complement components as well as endogenous pro-aminopeptidase, pro-chitin-binding protein (cbpD). Cleaves its own pro-peptide. Involved in the pathogenesis of P.aeruginosa infections. The sequence is that of Elastase (lasB) from Pseudomonas aeruginosa (strain UCBPP-PA14).